A 171-amino-acid chain; its full sequence is 16S rRNA aminocarboxypropyltransferase (171 aa).

The S-adenosyl-L-methionine site is built by Thr-18, Leu-68, Leu-91, and Ser-110.

This sequence belongs to the TDD superfamily. TSR3 family.

Its subcellular location is the cytoplasm. It catalyses the reaction an N(1)-methylpseudouridine in rRNA + S-adenosyl-L-methionine = N(1)-methyl-N(3)-[(3S)-3-amino-3-carboxypropyl]pseudouridine in rRNA + S-methyl-5'-thioadenosine + H(+). In terms of biological role, aminocarboxypropyltransferase that catalyzes the aminocarboxypropyl transfer on pseudouridine corresponding to position 914 in M.jannaschii 16S rRNA. It constitutes the last step in biosynthesis of the hypermodified N1-methyl-N3-(3-amino-3-carboxypropyl) pseudouridine (m1acp3-Psi). The polypeptide is 16S rRNA aminocarboxypropyltransferase (Methanosphaera stadtmanae (strain ATCC 43021 / DSM 3091 / JCM 11832 / MCB-3)).